An 81-amino-acid chain; its full sequence is Cell division protein ZapB (81 aa).

Residues 5-81 adopt a coiled-coil conformation; that stretch reads LEVFEKLEAK…QALLGRMEEV (77 aa). The residue at position 10 (Lys-10) is an N6-acetyllysine. The disordered stretch occupies residues 36-67; that stretch reads NNSLSQEVQNAQHQREELERENNHLKEQQNGW. Residues 37-47 show a composition bias toward polar residues; the sequence is NSLSQEVQNAQ. The segment covering 48–62 has biased composition (basic and acidic residues); the sequence is HQREELERENNHLKE.

This sequence belongs to the ZapB family. In terms of assembly, homodimer. The ends of the coiled-coil dimer bind to each other, forming polymers. Interacts with FtsZ.

It localises to the cytoplasm. Its function is as follows. Non-essential, abundant cell division factor that is required for proper Z-ring formation. It is recruited early to the divisome by direct interaction with FtsZ, stimulating Z-ring assembly and thereby promoting cell division earlier in the cell cycle. Its recruitment to the Z-ring requires functional FtsA or ZipA. The polypeptide is Cell division protein ZapB (Shigella boydii serotype 4 (strain Sb227)).